The following is a 67-amino-acid chain: U-myrmeciitoxin(01)-Mg4a (67 aa).

A signal peptide spans 1 to 25 (MGKVFFFVLMIAIIGSTFLIEEALG).

Belongs to the ant myrmeciitoxin-01 family. As to quaternary structure, homodimer; disulfide-linked. Contains 2 intrachain disulfide bonds (one per chain) and 1 interchain disulfide bond. Expressed by the venom gland.

It is found in the secreted. This is U-myrmeciitoxin(01)-Mg4a from Myrmecia gulosa (Red bulldog ant).